The following is a 927-amino-acid chain: MPVRKQDTQRALTLLEEYRCKLHQTEDKQLRKSIERVIGIFQSNLFQALIDIQEFYEVTLLDNPKSSDNAKPTEPVQTINTWEYSSLPNSTATCETLPSSLILNVEKYRYPDDDITSQEPSSPHMLNDGRNVELVQISEKNISQKENIQGLVSHSLISPLKTPEADTPCPPIVPVIPVIPVPAESNVIPSSTPQANPPPVIVNTDLETPAYVNGTDAEYEYEEITLERGTSGLGFSIAGGTDNPHIGDDISIFITKIISGGAAAQDGRLRVNDCILRVNEVDVHDVTHSKAVEALKEAGSIVRLYVRRRKPVTEKIMDIKLVKGPKGLGFSIAGGVGNQHIPGDNSIYVTKIIEGGAAHKDGRLQIGDKLLAVNTVCLEEVSHEDAVTALKNTSDFVNLKVAKPTTMYMNDNYAPPDITNSYSQQVDNHISPSGFIGHPLPPSPGRYSPAPKGMLEDDDLTREPRKVVLQRGTTGLGFNIVGGEDGEGIFISFILAGGPADLSGELQKGDRIMSVNGVDLKSATHEQAAAALKNAGQTVTIVAQYRPEEYSRFEAKIHDLREQMMNSSISSGSGSLRTSQKRSLYVRALFDYDKTKDSGLPSQGLNFKFGDILHVVNASDDEWWQARQVTADGESEEIGVIPSKRRVEKKERARLKTVKFNSKARGDKGQSFNDKRKKNLFSRKFPFYKNKDQSEMETSDVDQHVTSNASDSESSYRGQEEYVLSYEPVNQQEVNYSRPVIILGPTKDRVNDDLISEFPEKFGSCVPHTTRPKRDYEIDGRDYHFVTSREQMEKDIQDHRFIEAGQYNSHLYGTSVQSVKEVAERGKHCILDVSGNAIKRLQIAQLYPIAIFIKPKSVENIIEMSKRVTEEQGRKTYERAMKLEQEFTEHFTAIVQGDTLEEIYNQIKQIIEEQSSTFIWVPAKEKL.

In terms of domain architecture, L27 spans 4–64; that stretch reads RKQDTQRALT…FYEVTLLDNP (61 aa). 3 PDZ domains span residues 223 to 310, 318 to 405, and 466 to 547; these read EITL…RRRK, DIKL…AKPT, and KVVL…QYRP. Positions 581-651 constitute an SH3 domain; it reads KRSLYVRALF…PSKRRVEKKE (71 aa). Positions 692–719 are disordered; it reads DQSEMETSDVDQHVTSNASDSESSYRGQ. A compositionally biased stretch (polar residues) spans 704 to 717; sequence HVTSNASDSESSYR. The region spanning 737 to 912 is the Guanylate kinase-like domain; sequence SRPVIILGPT…IYNQIKQIIE (176 aa).

Belongs to the MAGUK family.

The protein localises to the cell membrane. It is found in the endoplasmic reticulum membrane. It localises to the cell junction. The protein resides in the cytoplasm. Its subcellular location is the apical cell membrane. Its function is as follows. Essential multidomain scaffolding protein required for normal development. Recruits channels, receptors and signaling molecules to discrete plasma membrane domains in polarized cells. Promotes epithelial cell layer barrier function via maintaining cell-cell adhesion. May play a role in adherens junction assembly, signal transduction and cell proliferation. This Xenopus tropicalis (Western clawed frog) protein is Disks large homolog 1 (dlg1).